A 412-amino-acid chain; its full sequence is Serine hydroxymethyltransferase 1 (412 aa).

(6S)-5,6,7,8-tetrahydrofolate is bound by residues L116 and 120-122; that span reads GHL. An N6-(pyridoxal phosphate)lysine modification is found at K225.

This sequence belongs to the SHMT family. In terms of assembly, homodimer. Pyridoxal 5'-phosphate serves as cofactor.

Its subcellular location is the cytoplasm. It carries out the reaction (6R)-5,10-methylene-5,6,7,8-tetrahydrofolate + glycine + H2O = (6S)-5,6,7,8-tetrahydrofolate + L-serine. The protein operates within one-carbon metabolism; tetrahydrofolate interconversion. It functions in the pathway amino-acid biosynthesis; glycine biosynthesis; glycine from L-serine: step 1/1. Its function is as follows. Catalyzes the reversible interconversion of serine and glycine with tetrahydrofolate (THF) serving as the one-carbon carrier. This reaction serves as the major source of one-carbon groups required for the biosynthesis of purines, thymidylate, methionine, and other important biomolecules. Also exhibits THF-independent aldolase activity toward beta-hydroxyamino acids, producing glycine and aldehydes, via a retro-aldol mechanism. In Pseudomonas fluorescens (strain Pf0-1), this protein is Serine hydroxymethyltransferase 1.